The following is a 219-amino-acid chain: UPF0073 inner membrane protein YqfA (219 aa).

Residues 1-23 lie on the Cytoplasmic side of the membrane; the sequence is MVQKPLIKQGYSLAEEIANSVSH. The helical transmembrane segment at 24–44 threads the bilayer; that stretch reads GIGLVFGIVGLVLLLVQAVDL. Over 45–53 the chain is Periplasmic; the sequence is NASATAITS. A helical membrane pass occupies residues 54-74; that stretch reads YSLYGGSMILLFLASTLYHAI. Over 75–90 the chain is Cytoplasmic; sequence PHQRAKMWLKKFDHCA. Residues 91–111 form a helical membrane-spanning segment; that stretch reads IYLLIAGTYTPFLLVGLDSPL. Residues 112–113 lie on the Periplasmic side of the membrane; it reads AR. Residues 114-134 traverse the membrane as a helical segment; sequence GLMIVIWSLALLGILFKLTIA. Topologically, residues 135–138 are cytoplasmic; it reads HRFK. The helical transmembrane segment at 139–159 threads the bilayer; it reads ILSLVTYLAMGWLSLVVIYEM. Residues 160–165 are Periplasmic-facing; that stretch reads AVKLAA. The helical transmembrane segment at 166 to 186 threads the bilayer; sequence GSVTLLAVGGVVYSLGVIFYV. The Cytoplasmic portion of the chain corresponds to 187–195; sequence CKRIPYNHA. Residues 196-216 form a helical membrane-spanning segment; it reads IWHGFVLGGSVCHFLAIYLYI. Residues 217 to 219 lie on the Periplasmic side of the membrane; it reads GQA.

This sequence belongs to the UPF0073 (Hly-III) family.

It is found in the cell inner membrane. The protein is UPF0073 inner membrane protein YqfA (yqfA) of Escherichia coli O157:H7.